The following is a 609-amino-acid chain: UvrABC system protein C (609 aa).

A GIY-YIG domain is found at 15-92; the sequence is TGSGVYQMQD…IKQFRPRYNV (78 aa). The UVR domain maps to 202–237; that stretch reads DQVIIKLTERMEVTSENLVFEEAAHYRDQIRQLRRL.

This sequence belongs to the UvrC family. In terms of assembly, interacts with UvrB in an incision complex.

The protein resides in the cytoplasm. In terms of biological role, the UvrABC repair system catalyzes the recognition and processing of DNA lesions. UvrC both incises the 5' and 3' sides of the lesion. The N-terminal half is responsible for the 3' incision and the C-terminal half is responsible for the 5' incision. This is UvrABC system protein C from Coxiella burnetii (strain RSA 493 / Nine Mile phase I).